Here is a 506-residue protein sequence, read N- to C-terminus: Sodium-coupled neutral amino acid symporter 2 (506 aa).

A disordered region spans residues 1–23; it reads MKKAEMGRFNISPDEDSSSYSSN. Over 1–76 the chain is Cytoplasmic; it reads MKKAEMGRFN…HPGTTSFGMS (76 aa). Residues 1–96 form a regulates protein turnover upon amino acid deprivation region; sequence MKKAEMGRFN…SGILGLSYAM (96 aa). Serine 12, serine 21, serine 22, and serine 55 each carry phosphoserine. A helical transmembrane segment spans residues 77-96; that stretch reads VFNLSNAIVGSGILGLSYAM. Asparagine 82 provides a ligand contact to Na(+). Residues 97 to 102 are Extracellular-facing; the sequence is ANTGIA. The chain crosses the membrane as a helical span at residues 103–123; the sequence is LFIILLTFVSIFSLYSVHLLL. The Cytoplasmic segment spans residues 124-158; sequence KTANEGGSLLYEQLGYKAFGLVGKLAASGSITMQN. A helical transmembrane segment spans residues 159–177; sequence IGAMSSYLFIVKYELPLVI. The Extracellular segment spans residues 178–188; sequence QALTNIEDKTG. A helical membrane pass occupies residues 189 to 209; that stretch reads LWYLNGNYLVLLVSLVVILPL. Residues 210-217 are Cytoplasmic-facing; sequence SLFRNLGY. A helical membrane pass occupies residues 218 to 238; it reads LGYTSGLSLLCMVFFLIVVIC. At 239-292 the chain is on the extracellular side; the sequence is KKFQVPCPVEAALIINETINTTLTQPTALVPALSHNVTENDSCRPHYFIFNSQT. A disulfide bridge links cysteine 245 with cysteine 281. Asparagine 258 and asparagine 274 each carry an N-linked (GlcNAc...) asparagine glycan. A helical transmembrane segment spans residues 293 to 313; that stretch reads VYAVPILIFSFVCHPAVLPIY. Residues 314–329 lie on the Cytoplasmic side of the membrane; the sequence is EELKDRSRRRMMNVSK. A helical transmembrane segment spans residues 330–350; the sequence is ISFFAMFLMYLLAALFGYLTF. The Extracellular portion of the chain corresponds to 351 to 371; sequence YEHVESELLHTYSSILGTDIL. The chain crosses the membrane as a helical span at residues 372-392; sequence LLIVRLAVLMAVTLTVPVVIF. Threonine 386 is a binding site for Na(+). Over 393 to 413 the chain is Cytoplasmic; it reads PIRSSVTHLLCASKDFSWWRH. A helical transmembrane segment spans residues 414-434; the sequence is SLITVSILAFTNLLVIFVPTI. Residues 435-436 are Extracellular-facing; sequence RD. Residues 437-457 form a helical membrane-spanning segment; the sequence is IFGFIGASAASMLIFILPSAF. Topologically, residues 458–472 are cytoplasmic; it reads YIKLVKKEPMKSVQK. The helical transmembrane segment at 473 to 495 threads the bilayer; the sequence is IGALFFLLSGVLVMTGSMALIVL. Residues 496–506 are Extracellular-facing; sequence DWVHNAPGGGH.

This sequence belongs to the amino acid/polyamine transporter 2 family. Polyubiquitination by NEDD4L regulates the degradation and the activity of SLC38A2.

The protein localises to the cell membrane. The enzyme catalyses L-alanine(in) + Na(+)(in) = L-alanine(out) + Na(+)(out). The catalysed reaction is glycine(in) + Na(+)(in) = glycine(out) + Na(+)(out). It catalyses the reaction L-serine(in) + Na(+)(in) = L-serine(out) + Na(+)(out). It carries out the reaction L-proline(in) + Na(+)(in) = L-proline(out) + Na(+)(out). The enzyme catalyses L-methionine(in) + Na(+)(in) = L-methionine(out) + Na(+)(out). The catalysed reaction is L-histidine(in) + Na(+)(in) = L-histidine(out) + Na(+)(out). It catalyses the reaction L-asparagine(in) + Na(+)(in) = L-asparagine(out) + Na(+)(out). It carries out the reaction L-glutamine(in) + Na(+)(in) = L-glutamine(out) + Na(+)(out). The enzyme catalyses L-threonine(in) + Na(+)(in) = L-threonine(out) + Na(+)(out). The catalysed reaction is L-leucine(in) + Na(+)(in) = L-leucine(out) + Na(+)(out). It catalyses the reaction L-phenylalanine(in) + Na(+)(in) = L-phenylalanine(out) + Na(+)(out). Inhibited by N-methyl-D-glucamine. Inhibited by choline. Allosteric regulation of sodium ions binding by pH. Symporter that cotransports neutral amino acids and sodium ions from the extracellular to the intracellular side of the cell membrane. The transport is pH-sensitive, Li(+)-intolerant, electrogenic, driven by the Na(+) electrochemical gradient and cotransports of neutral amino acids and sodium ions with a stoichiometry of 1:1. May function in the transport of amino acids at the blood-brain barrier. May function in the transport of amino acids in the supply of maternal nutrients to the fetus through the placenta. Maintains a key metabolic glutamine/glutamate balance underpinning retrograde signaling by dendritic release of the neurotransmitter glutamate. Transports L-proline in differentiating osteoblasts for the efficient synthesis of proline-enriched proteins and provides proline essential for osteoblast differentiation and bone formation during bone development. This is Sodium-coupled neutral amino acid symporter 2 from Pan paniscus (Pygmy chimpanzee).